The chain runs to 1700 residues: Ras-responsive element-binding protein 1 (1700 aa).

The interval 31 to 63 is disordered; that stretch reads TENGGSPQGIKSPMKPPGPNRIGRRNQETKEEK. Residues serine 36 and serine 42 each carry the phosphoserine modification. 3 consecutive C2H2-type zinc fingers follow at residues 66–88, 97–119, and 125–147; these read YNCPLCEKICTTQHQLTMHIRQH, HACSICGKSLSSASSLDRHMLVH, and YKCTVCGQSFTTNGNMHRHMKIH. A disordered region spans residues 146–195; that stretch reads IHEKDTNSTTAAAPPSPLKRRRLSSKRKLSHDAESEDPGPAKKMVEDGQS. Serine 161 bears the Phosphoserine mark. Over residues 163-174 the composition is skewed to basic residues; sequence LKRRRLSSKRKL. Phosphoserine occurs at positions 175 and 180. Basic and acidic residues predominate over residues 184-195; that stretch reads GPAKKMVEDGQS. The C2H2-type 4 zinc finger occupies 206 to 228; it reads FHCPVCFKEFVCKYELETHMETH. Serine 229 bears the Phosphoserine mark. C2H2-type zinc fingers lie at residues 233-256 and 314-336; these read LRCDICCVTFRTHRGLLRHNALVH and FVCDTCDKAFPMLSSLILHRQSH. Glycyl lysine isopeptide (Lys-Gly) (interchain with G-Cter in SUMO2) cross-links involve residues lysine 433, lysine 500, lysine 549, lysine 564, lysine 591, and lysine 611. A Glycyl lysine isopeptide (Lys-Gly) (interchain with G-Cter in SUMO1); alternate cross-link involves residue lysine 613. Lysine 613 is covalently cross-linked (Glycyl lysine isopeptide (Lys-Gly) (interchain with G-Cter in SUMO2); alternate). Lysine 622 participates in a covalent cross-link: Glycyl lysine isopeptide (Lys-Gly) (interchain with G-Cter in SUMO2). 5 consecutive C2H2-type zinc fingers follow at residues 641–663, 669–691, 697–720, 751–782, and 788–813; these read YPCRFCNQVFAFSGVLRAHVRSH, YQCNICDYIAADKAALIRHIRTH, YICKICHYPFTVKANCERHLRKKH, TVCRLCGEDLKHYRALRIHMRTHCSRGLGGCH, and FECKECNAPFVAKRNCIHHILKQHLH. Residues lysine 855, lysine 883, and lysine 911 each participate in a glycyl lysine isopeptide (Lys-Gly) (interchain with G-Cter in SUMO2) cross-link. Disordered stretches follow at residues 939 to 991 and 1092 to 1177; these read IPKS…SLET and ADPG…AVDL. The span at 944-961 shows a compositional bias: basic and acidic residues; the sequence is KKGDKDTVVPSDAKKPEP. Serine 970 is modified (phosphoserine). Residues 1097 to 1111 are compositionally biased toward polar residues; that stretch reads SITSSNTVATDSPGS. Phosphoserine occurs at positions 1125, 1137, and 1138. The segment covering 1137–1146 has biased composition (low complexity); it reads SSPEEALPTE. Basic residues predominate over residues 1155 to 1165; it reads SRKRGRKRGLR. Serine 1172, serine 1179, serine 1180, and serine 1230 each carry phosphoserine. 4 disordered regions span residues 1195–1235, 1273–1368, 1383–1521, and 1564–1670; these read TNKF…AEDR, HTDS…QSLD, SEAG…RKKV, and VRHQ…SPAA. The segment at 1251-1273 adopts a C2H2-type 12 zinc-finger fold; the sequence is INCPHCPRVFPWASSLQRHMLTH. Positions 1273–1285 are enriched in low complexity; that stretch reads HTDSQSDTDTLTT. Residues 1327 to 1346 show a composition bias toward acidic residues; it reads SEEEEEKETEENPEPEEECR. The C2H2-type 13 zinc-finger motif lies at 1400–1422; the sequence is HACDTCGKNFKFLGTLSRHKKAH. A phosphoserine mark is found at serine 1450 and serine 1452. Residues 1492–1507 show a composition bias toward basic and acidic residues; the sequence is TAEKRGDGDKRPKTDS. 2 C2H2-type zinc fingers span residues 1520–1542 and 1548–1570; these read KVCSVCNKRFWSLQDLTRHMRSH and YKCQTCERTFTLKHSLVRHQRIH. Positions 1564 to 1580 are enriched in basic residues; that stretch reads VRHQRIHQKARHSKHHG. A phosphoserine mark is found at serine 1593 and serine 1606. Residues 1645–1660 are compositionally biased toward low complexity; it reads AEQAAEPSAPKEQASP. Serine 1667 carries the post-translational modification Phosphoserine.

Belongs to the krueppel C2H2-type zinc-finger protein family. In terms of assembly, interacts with NEUROD1. Interacts with AR. In terms of tissue distribution, expressed in splenic B-cells.

It localises to the nucleus speckle. In terms of biological role, transcription factor that binds specifically to the RAS-responsive elements (RRE) of gene promoters. Represses the angiotensinogen gene. Negatively regulates the transcriptional activity of AR. Potentiates the transcriptional activity of NEUROD1. Binds specifically to the allelic variant of the CDKN2A promoter present in Balb/c mice, which leads to a down-regulation of CDKN2A expression in this strain, and, as a consequence, to an elevated susceptibility to pristane-induced tumors. Promotes brown adipocyte differentiation. May be involved in Ras/Raf-mediated cell differentiation by enhancing calcitonin expression. This chain is Ras-responsive element-binding protein 1 (Rreb1), found in Mus musculus (Mouse).